The following is a 450-amino-acid chain: Neuronal acetylcholine receptor subunit alpha-10 (450 aa).

The first 24 residues, 1-24 (MGLRSHHLSLGLLLLFLLPAECLG), serve as a signal peptide directing secretion. Residues 25-237 (AEGRLALKLF…FTLLLRRRAA (213 aa)) lie on the Extracellular side of the membrane. N-linked (GlcNAc...) asparagine glycans are attached at residues N40 and N56. 2 disulfides stabilise this stretch: C154-C168 and C218-C219. A run of 3 helical transmembrane segments spans residues 238 to 258 (AYVC…PLAF), 268 to 288 (VSLG…LAES), and 302 to 322 (YMAT…IMNL). The Cytoplasmic segment spans residues 323–428 (HYCGPSVRPV…WKRLARVMDR (106 aa)). Positions 355-380 (EPCGQSRPPELSPSPQSPEGGAGPPA) are disordered. Residues 429 to 449 (FFLAIFFSMALVMSLLVLVQA) form a helical membrane-spanning segment.

It belongs to the ligand-gated ion channel (TC 1.A.9) family. Acetylcholine receptor (TC 1.A.9.1) subfamily. Alpha-10/CHRNA10 sub-subfamily. As to quaternary structure, forms homo- or heterooligomeric channels in conjunction with CHRNA10. The native outer hair cell receptor may be composed of CHRNA9:CHRNA10 heterooligomers. Found in the stoichiometric form (CHRNA9)2:(CHRNA10)3. Expressed in inner-ear tissue, tonsil, immortalized B-cells, cultured T-cells and peripheral blood lymphocytes.

The protein localises to the synaptic cell membrane. It is found in the cell membrane. The enzyme catalyses Ca(2+)(in) = Ca(2+)(out). The catalysed reaction is K(+)(in) = K(+)(out). It catalyses the reaction Na(+)(in) = Na(+)(out). It carries out the reaction Mg(2+)(in) = Mg(2+)(out). With respect to regulation, activated by a myriad of ligands such as acetylcholine. AChR activity is inhibited by the antagonists alpha-conotoxins RgIA and GeXXA, small disulfide-constrained peptides from cone snails. Its function is as follows. Component of neuronal acetylcholine receptors (nAChRs) that function as pentameric, ligand-gated cation channels with high calcium permeability. nAChRs are excitatory neurotrasnmitter receptors formed by a collection of nAChR subunits. Each nAchR subunit confers differential attributes to channel properties, including activation, deactivation and desensitization kinetics, pH sensitivity, cation permeability, and binding to allosteric modulators. Forms heteropentamers with CHRNA9. Expressed in the inner ear, in sympathetic neurons and in other non-neuronal cells, such as skin keratinocytes and lymphocytes. nAChR formed by CHRNA9:CHRNA10 is involved in modulation of auditory stimuli. The channel is permeable to a range of divalent cations including calcium, the influx of which may activate a potassium current which hyperpolarizes the cell membrane. In the ear, mediates synaptic transmission between efferent olivocochlear fibers and hair cells of the cochlea, this may lead to a reduction in basilar membrane motion, altering the activity of auditory nerve fibers and reducing the range of dynamic hearing. This may protect against acoustic trauma. May also regulate keratinocyte adhesion. The protein is Neuronal acetylcholine receptor subunit alpha-10 of Homo sapiens (Human).